A 141-amino-acid polypeptide reads, in one-letter code: Transcription antitermination protein NusB (141 aa).

This sequence belongs to the NusB family.

In terms of biological role, involved in transcription antitermination. Required for transcription of ribosomal RNA (rRNA) genes. Binds specifically to the boxA antiterminator sequence of the ribosomal RNA (rrn) operons. In Treponema pallidum (strain Nichols), this protein is Transcription antitermination protein NusB.